Here is a 179-residue protein sequence, read N- to C-terminus: Large ribosomal subunit protein uL6 (179 aa).

Belongs to the universal ribosomal protein uL6 family. In terms of assembly, part of the 50S ribosomal subunit.

This protein binds to the 23S rRNA, and is important in its secondary structure. It is located near the subunit interface in the base of the L7/L12 stalk, and near the tRNA binding site of the peptidyltransferase center. The protein is Large ribosomal subunit protein uL6 of Mycolicibacterium vanbaalenii (strain DSM 7251 / JCM 13017 / BCRC 16820 / KCTC 9966 / NRRL B-24157 / PYR-1) (Mycobacterium vanbaalenii).